The chain runs to 1377 residues: MNRIYSLRYSAVARGFIAVSEFARKCVHKSVRRLCFPVLLLIPVLFSAGSLAGTVNNELGYQLFRDFAENKGMFRPGATNIAIYNKQGEFVGTLDKAAMPDFSAVDSEIGVATLINPQYIASVKHNGGYTNVSFGDGENRYNIVDRNNAPSLDFHAPRLDKLVTEVAPTAVTAQGAVAGAYLDKERYPVFYRLGSGTQYIKDSNGQLTKMGGAYSWLTGGTVGSLSSYQNGEMISTSSGLVFDYKLNGAMPIYGEAGDSGSPLFAFDTVQNKWVLVGVLTAGNGAGGRGNNWAVIPLDFIGQKFNEDNDAPVTFRTSEGGALEWSFNSSTGAGALTQGTTTYAMHGQQGNDLNAGKNLIFQGQNGQINLKDSVSQGAGSLTFRDNYTVTTSNGSTWTGAGIVVDNGVSVNWQVNGVKGDNLHKIGEGTLTVQGTGINEGGLKVGDGKVVLNQQADNKGQVQAFSSVNIASGRPTVVLTDERQVNPDTVSWGYRGGTLDVNGNSLTFHQLKAADYGAVLANNVDKRATITLDYALRADKVALNGWSESGKGTAGNLYKYNNPYTNTTDYFILKQSTYGYFPTDQSSNATWEFVGHSQGDAQKLVADRFNTAGYLFHGQLKGNLNVDNRLPEGVTGALVMDGAADISGTFTQENGRLTLQGHPVIHAYNTQSVADKLAASGDHSVLTQPTSFSQEDWENRSFTFDRLSLKNTDFGLGRNATLNTTIQADNSSVTLGDSRVFIDKNDGQGTAFTLEEGTSVATKDADKSVFNGTVNLDNQSVLNINDIFNGGIQANNSTVNISSDSAVLGNSTLTSTALNLNKGANALASQSFVSDGPVNISDATLSLNSRPDEVSHTLLPVYDYAGSWNLKGDDARLNVGPYSMLSGNINVQDKGTVTLGGEGELSPDLTLQNQMLYSLFNGYRNIWSGSLNAPDATVSMTDTQWSMNGNSTAGNMKLNRTIVGFNGGTSPFTTLTTDNLDAVQSAFVMRTDLNKADKLVINKSATGHDNSIWVNFLKKPSNKDTLDIPLVSAPEATADNLFRASTRVVGFSDVTPILSVRKEDGKKEWVLDGYQVARNDGQGKAAATFMHISYNNFITEVNNLNKRMGDLRDINGEAGTWVRLLNGSGSADGGFTDHYTLLQMGADRKHELGSMDLFTGVMATYTDTDASADLYSGKTKSWGGGFYASGLFRSGAYFDVIAKYIHNENKYDLNFAGAGKQNFRSHSLYAGAEVGYRYHLTDTTFVEPQAELVWGRLQGQTFNWNDSGMDVSMRRNSVNPLVGRTGVVSGKTFSGKDWSLTARAGLHYEFDLTDSADVHLKDAAGEHQINGRKDSRMLYGVGLNARFGDNTRLGLEVERSAFGKYNTDDAINANIRYSF.

Residues 1–52 form the signal peptide; the sequence is MNRIYSLRYSAVARGFIAVSEFARKCVHKSVRRLCFPVLLLIPVLFSAGSLA. In terms of domain architecture, Peptidase S6 spans 53–302; that stretch reads GTVNNELGYQ…AVIPLDFIGQ (250 aa). Catalysis depends on charge relay system residues His125, Asp153, and Ser259. In terms of domain architecture, Autotransporter spans 1111 to 1377; it reads DINGEAGTWV…AINANIRYSF (267 aa).

In terms of processing, cleaved to release the mature protein from the outer membrane.

The protein localises to the periplasm. It localises to the secreted. The protein resides in the cell surface. It is found in the cell outer membrane. With respect to regulation, protease activity is inhibited by 3,4-dichloroisocoumarin. Interacts with hemoglobin, degrades it and subsequently binds the released heme. Could make heme accessible not only for E.coli, but also for B.fragilis during mixed intra-abdominal infections. Has a role in abscess formation. This Escherichia coli protein is Hemoglobin-binding protease hbp autotransporter (hbp).